Here is a 264-residue protein sequence, read N- to C-terminus: Acyl-[acyl-carrier-protein]--UDP-N-acetylglucosamine O-acyltransferase (264 aa).

It belongs to the transferase hexapeptide repeat family. LpxA subfamily. Homotrimer.

The protein resides in the cytoplasm. It catalyses the reaction a (3R)-hydroxyacyl-[ACP] + UDP-N-acetyl-alpha-D-glucosamine = a UDP-3-O-[(3R)-3-hydroxyacyl]-N-acetyl-alpha-D-glucosamine + holo-[ACP]. The protein operates within glycolipid biosynthesis; lipid IV(A) biosynthesis; lipid IV(A) from (3R)-3-hydroxytetradecanoyl-[acyl-carrier-protein] and UDP-N-acetyl-alpha-D-glucosamine: step 1/6. Functionally, involved in the biosynthesis of lipid A, a phosphorylated glycolipid that anchors the lipopolysaccharide to the outer membrane of the cell. This Chlorobaculum tepidum (strain ATCC 49652 / DSM 12025 / NBRC 103806 / TLS) (Chlorobium tepidum) protein is Acyl-[acyl-carrier-protein]--UDP-N-acetylglucosamine O-acyltransferase.